Consider the following 148-residue polypeptide: MKVIFLKDVKGKGKKGEIKNVPDGYANNFLLKQGLAAEANNSNMKTLEAQKRKEEKEAAAELENAKKLKETLEKLTVELKAKSGEGGRLFGSITSKQIVDELQKTHKIKLDKRKFEMEDAIRSLGYTNVTVKLHPQVTATVKVHVSEQ.

Belongs to the bacterial ribosomal protein bL9 family.

Its function is as follows. Binds to the 23S rRNA. This chain is Large ribosomal subunit protein bL9, found in Bacillus cytotoxicus (strain DSM 22905 / CIP 110041 / 391-98 / NVH 391-98).